We begin with the raw amino-acid sequence, 391 residues long: NADH-quinone oxidoreductase subunit D (391 aa).

This sequence belongs to the complex I 49 kDa subunit family. As to quaternary structure, NDH-1 is composed of 14 different subunits. Subunits NuoB, C, D, E, F, and G constitute the peripheral sector of the complex.

Its subcellular location is the cell inner membrane. It catalyses the reaction a quinone + NADH + 5 H(+)(in) = a quinol + NAD(+) + 4 H(+)(out). NDH-1 shuttles electrons from NADH, via FMN and iron-sulfur (Fe-S) centers, to quinones in the respiratory chain. The immediate electron acceptor for the enzyme in this species is believed to be ubiquinone. Couples the redox reaction to proton translocation (for every two electrons transferred, four hydrogen ions are translocated across the cytoplasmic membrane), and thus conserves the redox energy in a proton gradient. This Rickettsia felis (strain ATCC VR-1525 / URRWXCal2) (Rickettsia azadi) protein is NADH-quinone oxidoreductase subunit D.